The following is a 156-amino-acid chain: ATP synthase subunit b (156 aa).

Residues 3–23 (ITLTIFAQALAFAGLIWIVAT) form a helical membrane-spanning segment.

The protein belongs to the ATPase B chain family. As to quaternary structure, F-type ATPases have 2 components, F(1) - the catalytic core - and F(0) - the membrane proton channel. F(1) has five subunits: alpha(3), beta(3), gamma(1), delta(1), epsilon(1). F(0) has three main subunits: a(1), b(2) and c(10-14). The alpha and beta chains form an alternating ring which encloses part of the gamma chain. F(1) is attached to F(0) by a central stalk formed by the gamma and epsilon chains, while a peripheral stalk is formed by the delta and b chains.

It is found in the cell inner membrane. Its function is as follows. F(1)F(0) ATP synthase produces ATP from ADP in the presence of a proton or sodium gradient. F-type ATPases consist of two structural domains, F(1) containing the extramembraneous catalytic core and F(0) containing the membrane proton channel, linked together by a central stalk and a peripheral stalk. During catalysis, ATP synthesis in the catalytic domain of F(1) is coupled via a rotary mechanism of the central stalk subunits to proton translocation. In terms of biological role, component of the F(0) channel, it forms part of the peripheral stalk, linking F(1) to F(0). This chain is ATP synthase subunit b, found in Xanthomonas oryzae pv. oryzae (strain MAFF 311018).